Consider the following 208-residue polypeptide: uncharacterized protein (208 aa).

Positions M1–A16 are cleaved as a signal peptide. Disordered regions lie at residues M1–Q95 and R145–D176. A compositionally biased stretch (low complexity) spans A16–P25. The segment covering R32–P43 has biased composition (basic and acidic residues). Positions H44–R54 are enriched in basic residues. Residues Q55–Q95 are compositionally biased toward basic and acidic residues. Polar residues-rich tracts occupy residues K148–P158 and G167–D176.

This is an uncharacterized protein from Mycobacterium tuberculosis (strain CDC 1551 / Oshkosh).